We begin with the raw amino-acid sequence, 575 residues long: Protein NRT1/ PTR FAMILY 5.6 (575 aa).

2 helical membrane-spanning segments follow: residues 44–64 (AALF…GLAT) and 88–108 (WSGV…AYLG). Thr112 is subject to Phosphothreonine. The next 10 helical transmembrane spans lie at 113–133 (VLVA…SWFI), 153–173 (VAFF…KPSL), 195–215 (FFNW…TAVA), 223–243 (WGVA…IFFI), 339–359 (LIIN…CATQ), 375–395 (IGGF…TLII), 420–440 (ILQR…IAAL), 457–477 (VIWL…TLVG), 493–513 (LGIA…NLLI), and 541–561 (FYWF…IVAK).

This sequence belongs to the major facilitator superfamily. Proton-dependent oligopeptide transporter (POT/PTR) (TC 2.A.17) family. Expressed in stems, shoots, leaves, flowers and siliques.

Its subcellular location is the membrane. In Arabidopsis thaliana (Mouse-ear cress), this protein is Protein NRT1/ PTR FAMILY 5.6 (NPF5.6).